The sequence spans 131 residues: Glycine cleavage system H protein (131 aa).

The 83-residue stretch at 24-106 (VYCVGITEHA…YTDGWLFKIK (83 aa)) folds into the Lipoyl-binding domain. An N6-lipoyllysine modification is found at Lys-65.

This sequence belongs to the GcvH family. In terms of assembly, the glycine cleavage system is composed of four proteins: P, T, L and H. It depends on (R)-lipoate as a cofactor.

The glycine cleavage system catalyzes the degradation of glycine. The H protein shuttles the methylamine group of glycine from the P protein to the T protein. In Sodalis glossinidius (strain morsitans), this protein is Glycine cleavage system H protein.